A 117-amino-acid chain; its full sequence is Cell division protein FtsB (117 aa).

At 1 to 6 (MRDWRW) the chain is on the cytoplasmic side. Residues 7 to 24 (MLLVLALLLGWLQYRFWF) traverse the membrane as a helical segment. Residues 25–117 (GPGNSGEVMM…QVGEHPADVP (93 aa)) lie on the Periplasmic side of the membrane. Positions 29–69 (SGEVMMLEAQVTNQERDNEGLQQRNDALAAEVKDLKEGQSA) form a coiled coil.

It belongs to the FtsB family. Part of a complex composed of FtsB, FtsL and FtsQ.

It localises to the cell inner membrane. Its function is as follows. Essential cell division protein. May link together the upstream cell division proteins, which are predominantly cytoplasmic, with the downstream cell division proteins, which are predominantly periplasmic. The sequence is that of Cell division protein FtsB from Stenotrophomonas maltophilia (strain R551-3).